Here is a 259-residue protein sequence, read N- to C-terminus: Undecaprenyl-diphosphatase 3 (259 aa).

8 helical membrane-spanning segments follow: residues 1-21 (MNWLEAFILGIIQGLTEFLPI), 39-59 (AGLFLDTMLHIGTLLAVFIYY), 71-91 (FSKLMLLLIVGTIPAVVIGLL), 99-119 (ISKTGITIGWEFLVSGFFLYM), 133-153 (ITYKDALIIGSFQAAAIFPAI), 174-194 (AYFSFLLSTPAIVGAIILQFV), 208-228 (SLIVGTLSAAFFGYIAVSWMI), and 239-259 (FAYYVWGLGILILMLQFTDVF).

Belongs to the UppP family.

The protein resides in the cell membrane. The enzyme catalyses di-trans,octa-cis-undecaprenyl diphosphate + H2O = di-trans,octa-cis-undecaprenyl phosphate + phosphate + H(+). Functionally, catalyzes the dephosphorylation of undecaprenyl diphosphate (UPP). Confers resistance to bacitracin. The polypeptide is Undecaprenyl-diphosphatase 3 (Bacillus cereus (strain ATCC 14579 / DSM 31 / CCUG 7414 / JCM 2152 / NBRC 15305 / NCIMB 9373 / NCTC 2599 / NRRL B-3711)).